Reading from the N-terminus, the 304-residue chain is Insulin-like growth factor-binding protein 2 (304 aa).

Positions 1-34 (MLPRLGGPALPLLLPSLLLLLLLGAGGCGPGVRA) are cleaved as a signal peptide. Positions 36–118 (VLFRCPPCTP…VTGAGTCEKR (83 aa)) constitute an IGFBP N-terminal domain. 9 disulfides stabilise this stretch: cysteine 40–cysteine 68, cysteine 43–cysteine 70, cysteine 51–cysteine 71, cysteine 59–cysteine 74, cysteine 82–cysteine 95, cysteine 89–cysteine 115, cysteine 206–cysteine 240, cysteine 251–cysteine 262, and cysteine 264–cysteine 285. In terms of domain architecture, Thyroglobulin type-1 spans 203–285 (RTPCQQELDQ…APTIRGDPEC (83 aa)). A Cell attachment site motif is present at residues 280–282 (RGD).

As to quaternary structure, interacts with IGF1. Interacts with IGF2. Interacts (via RGD motif) with integrin alpha5/ITGA5; this interaction induces cell migration, adhesion or apoptosis according to the context. Interacts with PTPRB; this interaction leads to PTPRB dimerization and inactivation. In terms of processing, cleaved by MMP9 leading to release of free IGF2 from IGFBP2-IGF2 complex, which contributes to enhance the motility and the growth of astrocytes. Post-translationally, O-glycosylated. In terms of tissue distribution, in adults, expressed in brain, testes, ovaries, and kidney. Expression in the adult liver is barely detectable.

Its subcellular location is the secreted. In terms of biological role, multifunctional protein that plays a critical role in regulating the availability of IGFs such as IGF1 and IGF2 to their receptors and thereby regulates IGF-mediated cellular processes including proliferation, differentiation, and apoptosis in a cell-type specific manner. Functions coordinately with receptor protein tyrosine phosphatase beta/PTPRB and the IGF1 receptor to regulate IGF1-mediated signaling by stimulating the phosphorylation of PTEN leading to its inactivation and AKT1 activation. Plays a positive role in cell migration via interaction with integrin alpha5/ITGA5 through an RGD motif. Additionally, interaction with ITGA5/ITGB1 enhances the adhesion of endothelial progenitor cells to endothelial cells. Upon mitochondrial damage, facilitates apoptosis with ITGA5 of podocytes, and then activates the phosphorylation of focal adhesion kinase (FAK)-mediated mitochondrial injury. The polypeptide is Insulin-like growth factor-binding protein 2 (Igfbp2) (Rattus norvegicus (Rat)).